Consider the following 160-residue polypeptide: Transcription elongation factor GreA (160 aa).

Residues 12–76 are a coiled coil; it reads EGVKKLEEEL…QLENMLKNAS (65 aa).

It belongs to the GreA/GreB family.

In terms of biological role, necessary for efficient RNA polymerase transcription elongation past template-encoded arresting sites. The arresting sites in DNA have the property of trapping a certain fraction of elongating RNA polymerases that pass through, resulting in locked ternary complexes. Cleavage of the nascent transcript by cleavage factors such as GreA or GreB allows the resumption of elongation from the new 3'terminus. GreA releases sequences of 2 to 3 nucleotides. The protein is Transcription elongation factor GreA of Clostridium botulinum (strain Kyoto / Type A2).